The primary structure comprises 372 residues: Glutamate 5-kinase (372 aa).

Position 14 (K14) interacts with ATP. The substrate site is built by S54, D141, and N153. 173–174 (TD) is an ATP binding site. A PUA domain is found at 280-358 (AGAVVLDNGA…ADIAAILGFV (79 aa)).

The protein belongs to the glutamate 5-kinase family.

It localises to the cytoplasm. It carries out the reaction L-glutamate + ATP = L-glutamyl 5-phosphate + ADP. Its pathway is amino-acid biosynthesis; L-proline biosynthesis; L-glutamate 5-semialdehyde from L-glutamate: step 1/2. Functionally, catalyzes the transfer of a phosphate group to glutamate to form L-glutamate 5-phosphate. The protein is Glutamate 5-kinase of Janthinobacterium sp. (strain Marseille) (Minibacterium massiliensis).